Consider the following 100-residue polypeptide: Small ribosomal subunit protein bS18c (100 aa).

Basic residues predominate over residues 1 to 19 (MDKSKRPFRKSKRSFRRRL). Residues 1 to 23 (MDKSKRPFRKSKRSFRRRLPPIG) are disordered.

This sequence belongs to the bacterial ribosomal protein bS18 family. In terms of assembly, part of the 30S ribosomal subunit.

The protein localises to the plastid. It localises to the chloroplast. The chain is Small ribosomal subunit protein bS18c from Calycanthus floridus var. glaucus (Eastern sweetshrub).